The following is a 635-amino-acid chain: 1-deoxy-D-xylulose-5-phosphate synthase (635 aa).

Thiamine diphosphate is bound by residues His77 and 118 to 120 (GHA). Asp149 contributes to the Mg(2+) binding site. Residues 150 to 151 (GS), Asn178, Phe290, and Glu375 each bind thiamine diphosphate. Residue Asn178 coordinates Mg(2+).

This sequence belongs to the transketolase family. DXPS subfamily. Homodimer. The cofactor is Mg(2+). Thiamine diphosphate is required as a cofactor.

It catalyses the reaction D-glyceraldehyde 3-phosphate + pyruvate + H(+) = 1-deoxy-D-xylulose 5-phosphate + CO2. It functions in the pathway metabolic intermediate biosynthesis; 1-deoxy-D-xylulose 5-phosphate biosynthesis; 1-deoxy-D-xylulose 5-phosphate from D-glyceraldehyde 3-phosphate and pyruvate: step 1/1. Functionally, catalyzes the acyloin condensation reaction between C atoms 2 and 3 of pyruvate and glyceraldehyde 3-phosphate to yield 1-deoxy-D-xylulose-5-phosphate (DXP). The protein is 1-deoxy-D-xylulose-5-phosphate synthase of Chlorobium phaeovibrioides (strain DSM 265 / 1930) (Prosthecochloris vibrioformis (strain DSM 265)).